The following is a 270-amino-acid chain: Release factor glutamine methyltransferase (270 aa).

Residues 113-117 (GTGSG), Asp136, and Asn177 each bind S-adenosyl-L-methionine. 177–180 (NPPY) lines the substrate pocket.

Belongs to the protein N5-glutamine methyltransferase family. PrmC subfamily.

The catalysed reaction is L-glutaminyl-[peptide chain release factor] + S-adenosyl-L-methionine = N(5)-methyl-L-glutaminyl-[peptide chain release factor] + S-adenosyl-L-homocysteine + H(+). Its function is as follows. Methylates the class 1 translation termination release factors RF1/PrfA and RF2/PrfB on the glutamine residue of the universally conserved GGQ motif. This chain is Release factor glutamine methyltransferase, found in Lactococcus lactis subsp. lactis (strain IL1403) (Streptococcus lactis).